The following is a 470-amino-acid chain: V-type ATP synthase beta chain (470 aa).

This sequence belongs to the ATPase alpha/beta chains family.

Its function is as follows. Produces ATP from ADP in the presence of a proton gradient across the membrane. The V-type beta chain is a regulatory subunit. In Deinococcus geothermalis (strain DSM 11300 / CIP 105573 / AG-3a), this protein is V-type ATP synthase beta chain.